Reading from the N-terminus, the 1233-residue chain is Structural maintenance of chromosomes protein 1A (1233 aa).

32 to 39 is a binding site for ATP; sequence GPNGSGKS. 2 coiled-coil regions span residues 104–124 and 163–503; these read EYKI…LEKL and ELAQ…KAEI. Positions 284 to 293 are enriched in basic and acidic residues; the sequence is IKEKDSELNQ. Disordered stretches follow at residues 284–308 and 348–369; these read IKEK…TSHK and QEFE…TLEE. Residues S358 and S360 each carry the phosphoserine modification. Residues 515–629 enclose the SMC hinge domain; it reads VYGRLIDLCQ…DNVEDARRIA (115 aa). 2 positions are modified to N6-acetyllysine: K648 and K713. A coiled-coil region spans residues 660-935; it reads KAKARRWDEK…RHNLLQACKM (276 aa). A disordered region spans residues 947–968; that stretch reads MDDISQEEGSSQGEDSVSGSQR. Low complexity predominate over residues 953–967; it reads EEGSSQGEDSVSGSQ. Residues S957, S962, S966, and S970 each carry the phosphoserine modification. Positions 991 to 1068 form a coiled coil; it reads KDAQAEEEIK…FEQIKKERFD (78 aa). K1037 is modified (N6-acetyllysine).

Belongs to the SMC family. SMC1 subfamily. Forms a heterodimer with SMC3 in cohesin complexes. Cohesin complexes are composed of the SMC1 (SMC1A or meiosis-specific SMC1B) and SMC3 heterodimer attached via their SMC hinge domain, RAD21 which link them, and one STAG protein (STAG1, STAG2 or meiosis-specific STAG3), which interacts with RAD21. In germ cell cohesin complexes, SMC1A is mutually exclusive with SMC1B. Found in a complex with CDCA5, SMC3 and RAD21, PDS5A/SCC-112 and PDS5B/APRIN. Interacts with NDC80, SYCP2, STAG3, BRCA1 and BRAT1. The cohesin complex interacts with the cohesin loading complex subunits NIPBL/Scc2 (via HEAT repeats) and MAU2/Scc4. NIPBL directly contacts all members of the complex, RAD21, SMC1A/B, SMC3 and STAG1. Interacts with RPGR. Found in a complex containing POLE and SMC3. Post-translationally, phosphorylated upon ionizing radiation or DNA methylation. Phosphorylation of Ser-957 and Ser-966 activates it and is required for S-phase checkpoint activation. Ubiquitinated by the DCX(DCAF15) complex, leading to its degradation.

Its subcellular location is the nucleus. The protein localises to the chromosome. It is found in the centromere. Functionally, involved in chromosome cohesion during cell cycle and in DNA repair. Involved in DNA repair via its interaction with BRCA1 and its related phosphorylation by ATM, and works as a downstream effector in the ATM/NBS1 branch of S-phase checkpoint. Central component of cohesin complex. The cohesin complex is required for the cohesion of sister chromatids after DNA replication. The cohesin complex apparently forms a large proteinaceous ring within which sister chromatids can be trapped. At anaphase, the complex is cleaved and dissociates from chromatin, allowing sister chromatids to segregate. The cohesin complex may also play a role in spindle pole assembly during mitosis. Involved in DNA repair via its interaction with BRCA1 and its related phosphorylation by ATM, or via its phosphorylation by ATR. Works as a downstream effector both in the ATM/NBS1 branch and in the ATR/MSH2 branch of S-phase checkpoint. This is Structural maintenance of chromosomes protein 1A (SMC1A) from Bos taurus (Bovine).